The sequence spans 1306 residues: Receptor-type tyrosine-protein phosphatase C (1306 aa).

The N-terminal stretch at 1–25 is a signal peptide; that stretch reads MTMYLWLKLLAFGFAFLDTEVFVTG. The Extracellular segment spans residues 26–577; sequence QSPTPSPTGL…LHHSTSYNSK (552 aa). The tract at residues 28–163 is disordered; the sequence is PTPSPTGLTT…TASTFPTDPV (136 aa). Polar residues-rich tracts occupy residues 52–61 and 70–131; these read THTTAFSPAS and SETT…SGSA. N-linked (GlcNAc...) asparagine glycans are attached at residues asparagine 80, asparagine 92, asparagine 97, asparagine 186, asparagine 192, asparagine 199, asparagine 234, asparagine 262, asparagine 272, and asparagine 278. Asparagine 286 is a glycosylation site (N-linked (GlcNAc...) asparagine; atypical). Residues asparagine 337, asparagine 380, asparagine 421, asparagine 470, asparagine 490, and asparagine 531 are each glycosylated (N-linked (GlcNAc...) asparagine). 2 consecutive Fibronectin type-III domains span residues 391–483 and 484–576; these read SPGE…TKSA and PPSQ…SYNS. A helical transmembrane segment spans residues 578-598; the sequence is ALIAFLAFLIIVTSIALLVVL. The Cytoplasmic portion of the chain corresponds to 599 to 1306; the sequence is YKIYDLHKKR…PASPALNQGS (708 aa). 2 Tyrosine-protein phosphatase domains span residues 653–912 and 944–1228; these read FLAE…LVEY and LEAE…IAST. Tyrosine 683 bears the Phosphotyrosine mark. Residues aspartate 821, 853-859, and glutamine 897 contribute to the substrate site; that span reads CSAGVGR. Cysteine 853 acts as the Phosphocysteine intermediate in catalysis. Serine 975, serine 994, serine 997, serine 1001, serine 1004, serine 1005, and serine 1009 each carry phosphoserine. The segment at 993 to 1014 is disordered; it reads MSKESEHDSDESSDDDSDSEEP. Residues 999-1012 show a composition bias toward acidic residues; the sequence is HDSDESSDDDSDSE. Cysteine 1169 functions as the Phosphocysteine intermediate in the catalytic mechanism. Residues 1261–1306 are disordered; it reads CVNPLGAPEKLPEAKEQAEGSEPTSGTEGPEHSVNGPASPALNQGS. Residue serine 1299 is modified to Phosphoserine.

The protein belongs to the protein-tyrosine phosphatase family. Receptor class 1/6 subfamily. Binds GANAB and PRKCSH. Interacts with SKAP1. Interacts with DPP4; the interaction is enhanced in an interleukin-12-dependent manner in activated lymphocytes. Interacts with CD53; this interaction stabilizes PTPRC on the membrane and is required for optimal phosphatase activity. As to quaternary structure, interacts with CLEC10A. In terms of assembly, does not interact with CLEC10A. (Microbial infection) Interacts with human cytomegalovirus protein UL11; the interaction is required for binding of UL11 to T-cells. In terms of processing, heavily N- and O-glycosylated. In terms of tissue distribution, isoform 1: Detected in thymocytes. Isoform 2: Detected in thymocytes. Isoform 3: Detected in thymocytes. Isoform 4: Not detected in thymocytes. Isoform 5: Detected in thymocytes. Isoform 6: Not detected in thymocytes. Isoform 7: Detected in thymocytes. Isoform 8: Not detected in thymocytes.

It localises to the cell membrane. The protein resides in the membrane raft. Its subcellular location is the synapse. It catalyses the reaction O-phospho-L-tyrosyl-[protein] + H2O = L-tyrosyl-[protein] + phosphate. In terms of biological role, protein tyrosine-protein phosphatase required for T-cell activation through the antigen receptor. Acts as a positive regulator of T-cell coactivation upon binding to DPP4. The first PTPase domain has enzymatic activity, while the second one seems to affect the substrate specificity of the first one. Upon T-cell activation, recruits and dephosphorylates SKAP1 and FYN. Dephosphorylates LYN, and thereby modulates LYN activity. Interacts with CLEC10A at antigen presenting cell-T cell contact; CLEC10A on immature dendritic cells recognizes Tn antigen-carrying PTPRC/CD45 receptor on effector T cells and modulates T cell activation threshold to limit autoreactivity. (Microbial infection) Acts as a receptor for human cytomegalovirus protein UL11 and mediates binding of UL11 to T-cells, leading to reduced induction of tyrosine phosphorylation of multiple signaling proteins upon T-cell receptor stimulation and impaired T-cell proliferation. In Homo sapiens (Human), this protein is Receptor-type tyrosine-protein phosphatase C.